The following is a 359-amino-acid chain: Membrane-bound lytic murein transglycosylase C (359 aa).

An N-terminal signal peptide occupies residues 1-16 (MKKYLALALIAPLLIS). Cysteine 17 carries N-palmitoyl cysteine lipidation. The S-diacylglycerol cysteine moiety is linked to residue cysteine 17.

The protein belongs to the transglycosylase Slt family.

The protein resides in the cell outer membrane. It catalyses the reaction Exolytic cleavage of the (1-&gt;4)-beta-glycosidic linkage between N-acetylmuramic acid (MurNAc) and N-acetylglucosamine (GlcNAc) residues in peptidoglycan, from either the reducing or the non-reducing ends of the peptidoglycan chains, with concomitant formation of a 1,6-anhydrobond in the MurNAc residue.. In terms of biological role, murein-degrading enzyme. May play a role in recycling of muropeptides during cell elongation and/or cell division. The chain is Membrane-bound lytic murein transglycosylase C from Escherichia coli (strain SMS-3-5 / SECEC).